The following is a 250-amino-acid chain: Small ribosomal subunit protein uS2 (250 aa).

Belongs to the universal ribosomal protein uS2 family.

The polypeptide is Small ribosomal subunit protein uS2 (Polaromonas sp. (strain JS666 / ATCC BAA-500)).